The sequence spans 507 residues: ATP synthase subunit alpha, chloroplastic (507 aa).

170–177 (GDRQTGKT) serves as a coordination point for ATP. The residue at position 383 (Ser383) is a Phosphoserine.

The protein belongs to the ATPase alpha/beta chains family. F-type ATPases have 2 components, CF(1) - the catalytic core - and CF(0) - the membrane proton channel. CF(1) has five subunits: alpha(3), beta(3), gamma(1), delta(1), epsilon(1). CF(0) has four main subunits: a, b, b' and c. In terms of processing, only phosphorylated in mesophyll cells, and only when cells are grown under high rather than low light regimes (70 vs 900 umol photons/m-2/s).

It localises to the plastid. It is found in the chloroplast thylakoid membrane. The enzyme catalyses ATP + H2O + 4 H(+)(in) = ADP + phosphate + 5 H(+)(out). Functionally, produces ATP from ADP in the presence of a proton gradient across the membrane. The alpha chain is a regulatory subunit. The polypeptide is ATP synthase subunit alpha, chloroplastic (Zea mays (Maize)).